We begin with the raw amino-acid sequence, 368 residues long: Putative J domain-containing protein R445 (368 aa).

A J domain is found at 13 to 83; the sequence is DLYKILGLTN…KQRNEYNQRL (71 aa).

The sequence is that of Putative J domain-containing protein R445 from Acanthamoeba polyphaga mimivirus (APMV).